We begin with the raw amino-acid sequence, 64 residues long: Prokaryotic ubiquitin-like protein Pup (64 aa).

The segment at 1–37 is disordered; that stretch reads MAQEQTKRGGGGGEDDDLTGSTAAGQERREKLTDETD. The tract at residues 21 to 58 is ARC ATPase binding; that stretch reads STAAGQERREKLTDETDDLLDEIDDVLEENAEDFVRAY. The stretch at 23–52 forms a coiled coil; sequence AAGQERREKLTDETDDLLDEIDDVLEENAE. Residue Q64 is modified to Deamidated glutamine. Q64 participates in a covalent cross-link: Isoglutamyl lysine isopeptide (Gln-Lys) (interchain with K-? in acceptor proteins).

It belongs to the prokaryotic ubiquitin-like protein family. Strongly interacts with the proteasome-associated ATPase ARC through a hydrophobic interface; the interacting region of Pup lies in its C-terminal half. There is one Pup binding site per ARC hexamer ring. Post-translationally, is modified by deamidation of its C-terminal glutamine to glutamate by the deamidase Dop, a prerequisite to the subsequent pupylation process.

Its pathway is protein degradation; proteasomal Pup-dependent pathway. Protein modifier that is covalently attached to lysine residues of substrate proteins, thereby targeting them for proteasomal degradation. The tagging system is termed pupylation. This chain is Prokaryotic ubiquitin-like protein Pup, found in Mycolicibacterium vanbaalenii (strain DSM 7251 / JCM 13017 / BCRC 16820 / KCTC 9966 / NRRL B-24157 / PYR-1) (Mycobacterium vanbaalenii).